The following is a 1230-amino-acid chain: Cullin-associated NEDD8-dissociated protein 1 (1230 aa).

Ala2 carries the N-acetylalanine modification. HEAT repeat units follow at residues 2–39, 44–81, 83–119, 131–165, 171–208, 210–247, 248–282, 289–366, 370–407, 424–467, 471–510, and 515–552; these read ASASYHISNLLEKMTSSDKDFRFMATNDLMTELQKDSI, DSERKVVKMILKLLEDKNGEVQNLAVKCLGPLVSKVKE, QVETIVDTLCTNMLSDKEQLRDISSIGLKTVIGELPP, CKKITGRLTSAIAKQEDVSVQLEALDIMADMLSRQ, NFHPSILTCLLPQLTSPRLAVRKRTIIALGHLVMSCGN, VFVDLIEHLLSELSKNDSMSTTRTYIQCIAAISRQAGH, RIGEYLEKIIPLVVKFCNVDDDELREYCIQAFESF, EVYP…TRHE, EFYKTVSPALISRFKEREENVKADVFHAYLSLLKQTRP, PLTM…VLPG, QHIPVLVPGIIFSLNDKSSSSNLKIDALSCLYVILCNHSP, and PHVQALVPPVVACVGDPFYKITSEALLVTQQLVKVIRP. N6-acetyllysine is present on Lys55. The segment at 315–344 is disordered; sequence DEDEDENAMDADGGDDDDQGSDDEYSDDDD. Ser335 bears the Phosphoserine mark. Ser558 is modified (phosphoserine). HEAT repeat units follow at residues 563-602, 606-643, 646-683, 688-725, 729-768, 770-808, 809-845, 852-889, 890-927, 928-960, 961-998, 1002-1039, 1043-1097, 1099-1133, and 1140-1189; these read PYIKDLFTCTIKRLKAADIDQEVKERAISCMGQIICNLGD, SDLPNTLQIFLERLKNEITRLTTVKALTLIAGSPLKID, PVLGEGVPILASFLRKNQRALKLGTLSALDILIKNYSD, AMIDAVLDELPPLISESDMHVSQMAISFLTTLAKVYPS, KISGSILNELIGLVRSPLLQGGALSAMLDFFQALVVTGTN, LGYMDLLRMLTGPVYSQSTALTHKQSYYSIAKCVAALTR, ACPKEGPAVVGQFIQDVKNSRSTDSIRLLALLSLGEV, SGQLELKSVILEAFSSPSEEVKSAASYALGSISVGNLP, EYLPFVLQEITSQPKRQYLLLHSLKEIISSASVVGLKP, YVENIWALLLKHCECAEEGTRNVVAECLGKLTL, IDPETLLPRLKGYLISGSSYARSSVVTAVKFTISDHPQ, PLLKNCIGDFLKTLEDPDLNVRRVALVTFNSAAHNKPS, DLLD…DSCL, RLDIFEFLNHVEDGLKDHYDIKMLTFLMLVRLSTL, and QRLD…IPEA. Lys971 carries the N6-acetyllysine modification.

It belongs to the CAND family. In terms of assembly, interacts with TBP. Part of a complex that contains CUL1 and RBX1. Interacts with unneddylated cullins: interacts with CUL1, CUL2, CUL3, CUL4A, CUL4B and CUL5. Does not bind neddylated CUL1. Interaction with cullins is abolished in presence of COMMD1, which antagonizes with CAND1 for interacting with cullins. Interacts with ERCC6. Interacts with DCUN1D1, DCUN1D2, DCUN1D3, DCUN1D4 and DCUN1D5; these interactions are bridged by cullins and strongly inhibits the neddylation of cullins.

Its subcellular location is the cytoplasm. The protein localises to the nucleus. Its function is as follows. Key assembly factor of SCF (SKP1-CUL1-F-box protein) E3 ubiquitin ligase complexes that promotes the exchange of the substrate-recognition F-box subunit in SCF complexes, thereby playing a key role in the cellular repertoire of SCF complexes. Acts as a F-box protein exchange factor. The exchange activity of CAND1 is coupled with cycles of neddylation conjugation: in the deneddylated state, cullin-binding CAND1 binds CUL1-RBX1, increasing dissociation of the SCF complex and promoting exchange of the F-box protein. Probably plays a similar role in other cullin-RING E3 ubiquitin ligase complexes. The protein is Cullin-associated NEDD8-dissociated protein 1 (CAND1) of Bos taurus (Bovine).